A 334-amino-acid chain; its full sequence is Aspartate carbamoyltransferase catalytic subunit (334 aa).

Residues Arg-71 and Thr-72 each contribute to the carbamoyl phosphate site. Lys-99 lines the L-aspartate pocket. The carbamoyl phosphate site is built by Arg-121, His-151, and Gln-154. L-aspartate contacts are provided by Arg-184 and Arg-239. Carbamoyl phosphate contacts are provided by Gly-280 and Pro-281.

Belongs to the aspartate/ornithine carbamoyltransferase superfamily. ATCase family. In terms of assembly, heterododecamer (2C3:3R2) of six catalytic PyrB chains organized as two trimers (C3), and six regulatory PyrI chains organized as three dimers (R2).

The enzyme catalyses carbamoyl phosphate + L-aspartate = N-carbamoyl-L-aspartate + phosphate + H(+). It functions in the pathway pyrimidine metabolism; UMP biosynthesis via de novo pathway; (S)-dihydroorotate from bicarbonate: step 2/3. Its function is as follows. Catalyzes the condensation of carbamoyl phosphate and aspartate to form carbamoyl aspartate and inorganic phosphate, the committed step in the de novo pyrimidine nucleotide biosynthesis pathway. In Pseudomonas syringae pv. syringae (strain B728a), this protein is Aspartate carbamoyltransferase catalytic subunit.